Here is a 671-residue protein sequence, read N- to C-terminus: Phospholipid:diacylglycerol acyltransferase 1 (671 aa).

Residues 1–46 (MPLIHRKKPTEKPSTPPSEEVVHDEDSQKKPHESSKSHHKKSNGGG) form a disordered region. The Cytoplasmic segment spans residues 1 to 54 (MPLIHRKKPTEKPSTPPSEEVVHDEDSQKKPHESSKSHHKKSNGGGKWSCIDSC). Residues 20 to 36 (EVVHDEDSQKKPHESSK) show a composition bias toward basic and acidic residues. A helical transmembrane segment spans residues 55 to 75 (CWFIGCVCVTWWFLLFLYNAM). Residues 76-671 (PASFPQYVTE…EWSERIDLKL (596 aa)) lie on the Lumenal side of the membrane. A glycan (N-linked (GlcNAc...) asparagine) is linked at Asn-161. The active-site Acyl-ester intermediate is Ser-254. 2 N-linked (GlcNAc...) asparagine glycosylation sites follow: Asn-381 and Asn-434. Residues Asp-573 and His-626 each act as charge relay system in the active site. N-linked (GlcNAc...) asparagine glycosylation occurs at Asn-647.

The protein belongs to the AB hydrolase superfamily. Lipase family. In terms of tissue distribution, ubiquitous. Highest expression in young developing seeds.

It is found in the membrane. The catalysed reaction is a glycerophospholipid + a 1,2-diacyl-sn-glycerol = a monoacylglycerophospholipid + a triacyl-sn-glycerol. It functions in the pathway glycerolipid metabolism; triacylglycerol biosynthesis. Its function is as follows. Triacylglycerol formation by an acyl-CoA independent pathway. The enzyme preferentially transfers acyl groups from the sn-2 position of a phospholipid to diacylglycerol, thus forming an sn-1-lysophospholipid. Involved in epoxy and hydroxy fatty acid accumulation in seeds. Has complementary functions with DAG1 that are essential for triacylglycerol synthesis and normal development of both seeds and pollen. The chain is Phospholipid:diacylglycerol acyltransferase 1 (PDAT1) from Arabidopsis thaliana (Mouse-ear cress).